The chain runs to 314 residues: Small glutamine-rich tetratricopeptide repeat-containing protein alpha (314 aa).

Positions 65–99 (ATASKEMPQDPRGPDRTPPSEEDSAEAERLKTEGN) are disordered. A compositionally biased stretch (basic and acidic residues) spans 71-83 (MPQDPRGPDRTPP). Thr-81 is modified (phosphothreonine). At Ser-84 the chain carries Phosphoserine. Basic and acidic residues predominate over residues 90–99 (EAERLKTEGN). 3 TPR repeats span residues 91-124 (AERL…NPAN), 125-158 (AVYF…DPGY), and 159-192 (SKAY…DPDN). Residue Lys-137 is modified to N6-acetyllysine. The interval 249 to 268 (GMISGGHNPLGTPGSSPQHS) is disordered. Ser-302 carries the phosphoserine modification. A Phosphothreonine modification is found at Thr-304. Phosphoserine is present on Ser-306.

This sequence belongs to the SGT family. As to quaternary structure, homodimer. Homooligomer. Interacts with DNAJC5 and DNAJC5B. Interacts (via TPR repeats) with HSP90AA1. Interacts (via Gln-rich region) with SLC2A1. Interacts with HSP90AB1. Interacts (via TPR repeats) with HSPA8/Hsc70; the interaction is direct. Interacts with BAG6 (via ubiquitin-like domain); interaction prevents interaction between BAG6 and RNF126. Forms a multiprotein complex, at least composed of DNAJB12, DNAJB14, HSPA8/Hsc70 and SGTA; interaction with DNAJB14 and HSPA8/Hsc70 is direct. (Microbial infection) Interacts with NS1 from parvovirus H-1. In terms of tissue distribution, ubiquitously expressed.

It localises to the cytoplasm. It is found in the nucleus. Its function is as follows. Co-chaperone that binds misfolded and hydrophobic patches-containing client proteins in the cytosol. Mediates their targeting to the endoplasmic reticulum but also regulates their sorting to the proteasome when targeting fails. Functions in tail-anchored/type II transmembrane proteins membrane insertion constituting with ASNA1 and the BAG6 complex a targeting module. Functions upstream of the BAG6 complex and ASNA1, binding more rapidly the transmembrane domain of newly synthesized proteins. It is also involved in the regulation of the endoplasmic reticulum-associated misfolded protein catabolic process via its interaction with BAG6: collaborates with the BAG6 complex to maintain hydrophobic substrates in non-ubiquitinated states. Competes with RNF126 for interaction with BAG6, preventing the ubiquitination of client proteins associated with the BAG6 complex. Binds directly to HSC70 and HSP70 and regulates their ATPase activity. The polypeptide is Small glutamine-rich tetratricopeptide repeat-containing protein alpha (Sgta) (Rattus norvegicus (Rat)).